We begin with the raw amino-acid sequence, 263 residues long: uncharacterized protein (263 aa).

This sequence belongs to the flavoredoxin family. It depends on FMN as a cofactor.

This is an uncharacterized protein from Aeropyrum pernix (strain ATCC 700893 / DSM 11879 / JCM 9820 / NBRC 100138 / K1).